An 869-amino-acid chain; its full sequence is AP-3 complex subunit delta (869 aa).

Residue Ser2 is modified to N-acetylserine. HEAT repeat units follow at residues 33-70, 107-142, 143-179, 180-216, 218-254, 292-329, and 330-366; these read NFISRAVEEIRREIKATDLSTKSTALHKLSYLAALHGV, SVMLLITNQVRKDLNSANEYEVSLALECLSRIGTHD, LARDLTPEVFTLLGSSKSFVKKKAIGVVLRVFEKYHD, AVKVCFKRLVENLETSDPQILSAVVGVFCELATKDPQ, CLPLAPEFYKVLVDSRNNWVLIKVLKIFAKLALIEPR, AAVKLAVAKIREFLVEDDPNLKYLGLNALSIVAPKHLW, and AVLENKEVVVKAMSDEDPNVKLEALHLLMAMVNEDNV. A disordered region spans residues 738-869; sequence ISQDSFNPKR…EQVIIPDFLL (132 aa). Over residues 769-780 the composition is skewed to polar residues; it reads ITPQAKTNIQTA. Over residues 815–830 the composition is skewed to basic and acidic residues; sequence QEKEESSRIENHQNSE. The span at 831–850 shows a compositional bias: basic residues; the sequence is KKKKKKKKKKGEGSSKHKSR.

The protein belongs to the adaptor complexes large subunit family. Adaptor protein complex 3 (AP-3) is a heterotetramer composed of two large adaptins (delta-type subunit and beta-type subunit), a medium adaptin (mu-type subunit) and a small adaptin (sigma-type subunit). Binds to EPSIN2.

Its subcellular location is the cytoplasm. The protein resides in the golgi apparatus membrane. Its function is as follows. Part of the AP-3 complex, an adaptor-related complex which seems to be clathrin-associated. The complex is associated with the Golgi region as well as more peripheral structures. It facilitates the budding of vesicles from the Golgi membrane and may be directly involved in trafficking to the vacuole. It also function in maintaining the identity of lytic vacuoles and in regulating the transition between storage and lytic vacuoles. This is AP-3 complex subunit delta (DELTA-ADR) from Arabidopsis thaliana (Mouse-ear cress).